The chain runs to 589 residues: MKRSMYAGAVRSEHIGQELTLKGWVARRRDLGGLIFIDLRDREGIVQLVINPKTASNTVVKSAESLRSEYVIEVTGMIVERDQANDNLPTGCVEMQVTQLTILNASQTPPFEIKDKIEANDDTRLRYRYLDLRRPEMLKNFKLRAKVTHVIRNYLDDLDFIDVETPMLAKSTPEGARDYLVPSRMSRGHFYALPQSPQITKQLLMNAGFDRYYQIVKCFRDEDLRGDRQPEFTQVDLETSFLSEQEIQEITERLIACVMKEVKGIELQLPLPQISYDTAMNNYGSDKPDTRFEMTLQDLTDLVKNIDFKVFSQAPAVKAIVAKNAANSYSRKAIDKLTDIVKPFGAKGLAWVKYNDGKIGGPIAKFLTTIEDELIERLQLEANDLVFFVADDLEIANGSLGALRNHLAKELNLIDHSKFNFLWVVDWPMFEWSEEENRYTSAHHPFTLPQEDTVAELEGDLSKVRAVAYDIVLNGYELGGGSLRINQRETQERMFKALGFTKESAQKQFGFLLEAMDYGFPPHGGLALGLDRFVMLLAGKENIREVIAFPKNNKASDPMTQAPSLVSDKQLDELYLQVNKNAVKNNEQE.

L-aspartate is bound at residue Glu174. The interval 198 to 201 (QITK) is aspartate. Arg220 contributes to the L-aspartate binding site. Residues 220-222 (RDE) and Gln229 contribute to the ATP site. Residue His443 coordinates L-aspartate. Glu477 lines the ATP pocket. Residue Arg484 participates in L-aspartate binding. Residue 529 to 532 (GLDR) coordinates ATP.

The protein belongs to the class-II aminoacyl-tRNA synthetase family. Type 1 subfamily. As to quaternary structure, homodimer.

It localises to the cytoplasm. The enzyme catalyses tRNA(Asp) + L-aspartate + ATP = L-aspartyl-tRNA(Asp) + AMP + diphosphate. Catalyzes the attachment of L-aspartate to tRNA(Asp) in a two-step reaction: L-aspartate is first activated by ATP to form Asp-AMP and then transferred to the acceptor end of tRNA(Asp). This is Aspartate--tRNA ligase 2 from Streptococcus mutans serotype c (strain ATCC 700610 / UA159).